Here is a 585-residue protein sequence, read N- to C-terminus: Testis-specific serine kinase substrate (585 aa).

Low complexity predominate over residues 91–108 (EPDSSGTDSTTEDSGPLA). The interval 91–125 (EPDSSGTDSTTEDSGPLALPGPPASPTTPWAPEDP) is disordered. The residue at position 224 (Ser224) is a Phosphoserine. Disordered stretches follow at residues 264-312 (HGLS…SEQE) and 559-585 (LEGSTGAMGGGSNGGAPPKRGSPGSEQ). Ser281 carries the post-translational modification Phosphoserine; by TSSK1 and TSSK2. At Ser309 the chain carries Phosphoserine.

Post-translationally, phosphorylated on serine residue(s) by STK22A/TSSK1 and STK22B/TSSK2. In terms of tissue distribution, testis specific.

The protein localises to the cytoplasm. It localises to the cytoskeleton. It is found in the microtubule organizing center. The protein resides in the centrosome. Its subcellular location is the centriole. The protein localises to the cytoplasmic vesicle. It localises to the secretory vesicle. It is found in the acrosome. In terms of biological role, may play a role in testicular physiology, most probably in the process of spermatogenesis or spermatid development. The polypeptide is Testis-specific serine kinase substrate (Tsks) (Mus musculus (Mouse)).